The chain runs to 263 residues: Hydroxyethylthiazole kinase (263 aa).

M39 lines the substrate pocket. ATP is bound by residues K115 and T160. Residue G187 coordinates substrate.

It belongs to the Thz kinase family. The cofactor is Mg(2+).

The catalysed reaction is 5-(2-hydroxyethyl)-4-methylthiazole + ATP = 4-methyl-5-(2-phosphooxyethyl)-thiazole + ADP + H(+). The protein operates within cofactor biosynthesis; thiamine diphosphate biosynthesis; 4-methyl-5-(2-phosphoethyl)-thiazole from 5-(2-hydroxyethyl)-4-methylthiazole: step 1/1. Catalyzes the phosphorylation of the hydroxyl group of 4-methyl-5-beta-hydroxyethylthiazole (THZ). This is Hydroxyethylthiazole kinase from Staphylococcus haemolyticus (strain JCSC1435).